Here is a 291-residue protein sequence, read N- to C-terminus: tRNA-uridine aminocarboxypropyltransferase 1 (291 aa).

The segment at 158–181 is disordered; that stretch reads KNSAYEPSSKRPKFSPENDKNTYE. Basic and acidic residues predominate over residues 171–181; the sequence is FSPENDKNTYE. A DXTW motif is present at residues 199–202; the sequence is DSTW.

The protein belongs to the TDD superfamily. DTWD1 family.

The protein resides in the nucleus. The catalysed reaction is a uridine in tRNA + S-adenosyl-L-methionine = a 3-[(3S)-3-amino-3-carboxypropyl]uridine in tRNA + S-methyl-5'-thioadenosine + H(+). Functionally, catalyzes the formation of 3-(3-amino-3-carboxypropyl)uridine (acp3U) at position 20 in the D-loop of several cytoplasmic tRNAs (acp3U(20)). This Xenopus laevis (African clawed frog) protein is tRNA-uridine aminocarboxypropyltransferase 1.